The sequence spans 812 residues: cAMP-regulated phosphoprotein 21 (812 aa).

The tract at residues 1–130 is disordered; the sequence is MSEQGDLNQA…KDKTSEKPKI (130 aa). S2 bears the N-acetylserine mark. Positions 9–25 are enriched in low complexity; sequence QAIAEEGGTEQETATPE. The stretch at 32-58 forms a coiled coil; the sequence is ESLDEEEKLELQRRLEAQNQERRKSKS. Phosphoserine is present on S33. Positions 40–53 are enriched in basic and acidic residues; it reads LELQRRLEAQNQER. A Phosphoserine modification is found at S56. Residues 90–100 are compositionally biased toward low complexity; it reads IHLQLSSFSSL. The span at 102–130 shows a compositional bias: basic and acidic residues; sequence EEDKSRKDDSEREKEKDKNKDKTSEKPKI. S134 bears the Phosphoserine mark. The 64-residue stretch at 164–227 folds into the R3H domain; that stretch reads RMILLKMEQE…SVIINKTSST (64 aa). Residues 228–300 enclose the SUZ domain; that stretch reads RIPEQRFCEH…VRERIFAHDS (73 aa). A disordered region spans residues 246 to 281; it reads SQKRFILKRDNSSIDKEDNQQNRMHPFRDDRRSKSI. A Phosphoserine modification is found at S300. 3 disordered regions span residues 332-436, 485-544, and 561-632; these read RGNR…PLVS, HTGQ…MAGP, and LSRQ…QQPP. Residues 339–349 show a composition bias toward low complexity; sequence GRTSGSRQSSS. Over residues 351 to 360 the composition is skewed to basic and acidic residues; that stretch reads NELKWSDHQR. Positions 361–373 are enriched in polar residues; it reads AWSSTDSDSSNRN. 2 positions are modified to phosphoserine: S363 and S383. The segment covering 391-423 has biased composition (low complexity); sequence TRGDSTSSTRSTGKLSKAGSESSSSAGSSGSLS. A Phosphoserine modification is found at S562. Residues 582 to 602 show a composition bias toward polar residues; it reads LMPQPAQQPSYVIASTGQQLP. Residues 619 to 632 show a composition bias toward pro residues; that stretch reads QPPPSPQGFVQQPP. R655 is subject to Asymmetric dimethylarginine.

In terms of assembly, interacts with CALM1. Post-translationally, phosphorylation at Ser-56 favors interaction with CALM1. In terms of processing, isoform 1 is methylated by CARM1 at Arg-655 in immature thymocytes. In terms of tissue distribution, isoform 2 is expressed in brain. Isoform 1 is present in immature thymocytes (at protein level).

The protein localises to the cytoplasm. In terms of biological role, isoform 2 may act as a competitive inhibitor of calmodulin-dependent enzymes such as calcineurin in neurons. In Homo sapiens (Human), this protein is cAMP-regulated phosphoprotein 21 (ARPP21).